A 190-amino-acid chain; its full sequence is Potassium-transporting ATPase KdpC subunit (190 aa).

A helical transmembrane segment spans residues 10 to 30 (TFIFLLLITGGVYPLLTTVLG).

This sequence belongs to the KdpC family. In terms of assembly, the system is composed of three essential subunits: KdpA, KdpB and KdpC.

The protein resides in the cell inner membrane. Functionally, part of the high-affinity ATP-driven potassium transport (or Kdp) system, which catalyzes the hydrolysis of ATP coupled with the electrogenic transport of potassium into the cytoplasm. This subunit acts as a catalytic chaperone that increases the ATP-binding affinity of the ATP-hydrolyzing subunit KdpB by the formation of a transient KdpB/KdpC/ATP ternary complex. This Escherichia coli (strain SE11) protein is Potassium-transporting ATPase KdpC subunit.